A 146-amino-acid polypeptide reads, in one-letter code: Small ribosomal subunit protein eS19 (146 aa).

It belongs to the eukaryotic ribosomal protein eS19 family.

In Oryza sativa subsp. japonica (Rice), this protein is Small ribosomal subunit protein eS19 (RPS19A).